Here is a 596-residue protein sequence, read N- to C-terminus: Cell adhesion molecule CEACAM20 (596 aa).

An N-terminal signal peptide occupies residues 1–30 (MGPADSWGHHWMGILLSASLCTVWSPPAAA). Over 31–450 (QLTLNANPLD…SSLSSGAIAG (420 aa)) the chain is Extracellular. 4 Ig-like C2-type domains span residues 58–154 (PQIH…PIFL), 160–246 (PDPV…GTLK), 256–341 (PQVV…LELT), and 346–432 (PDQV…TSVL). Cysteines 90 and 138 form a disulfide. N-linked (GlcNAc...) asparagine glycans are attached at residues Asn-96 and Asn-105. A disulfide bridge links Cys-276 with Cys-324. N-linked (GlcNAc...) asparagine glycans are attached at residues Asn-280, Asn-306, Asn-317, Asn-368, and Asn-415. An intrachain disulfide couples Cys-375 to Cys-416. The helical transmembrane segment at 451 to 471 (IVIGILAVIAVASELGYFLCI) threads the bilayer. Topologically, residues 472-585 (RNARRPSRKT…SIYEELVNPE (114 aa)) are cytoplasmic. 2 disordered regions span residues 477 to 510 (PSRKTTEDPSHETSQPIPKEEHPTEPSSESLSPE) and 527 to 563 (QPPDLPEETYETKLPSASRRGNSFSPWKPPPKPLMPP). Residues 501–510 (EPSSESLSPE) are compositionally biased toward low complexity. Residues 553–562 (WKPPPKPLMP) are compositionally biased toward pro residues. Tyr-578 and Tyr-589 each carry phosphotyrosine.

It belongs to the immunoglobulin superfamily. CEA family. In terms of assembly, interacts (via extracellular domain) with PTPRH (via extracellular domain); the interaction dephosphorylates CEACAM20. Interacts (phosphorylated form) with SYK (via SH2 domains); the interaction further enhances CEACAM20 phosphorylation. Phosphorylated on tyrosine residues by SYK, SRC and FYN in vitro.

The protein resides in the cell projection. It localises to the microvillus membrane. The protein localises to the apical cell membrane. Its function is as follows. Together with the tyrosine-protein kinase SYK, enhances production of the cytokine CXCL8/IL-8 via the NFKB pathway and may thus have a role in the intestinal immune response. This Homo sapiens (Human) protein is Cell adhesion molecule CEACAM20.